The primary structure comprises 225 residues: UPF0173 metal-dependent hydrolase PAE2160 (225 aa).

It belongs to the UPF0173 family.

The polypeptide is UPF0173 metal-dependent hydrolase PAE2160 (Pyrobaculum aerophilum (strain ATCC 51768 / DSM 7523 / JCM 9630 / CIP 104966 / NBRC 100827 / IM2)).